The primary structure comprises 298 residues: Protoheme IX farnesyltransferase (298 aa).

9 consecutive transmembrane segments (helical) span residues 26-46 (VVGH…PGVP), 52-72 (FWAS…NHFL), 98-118 (VVGF…AFVN), 120-140 (LTAF…TVYL), 148-168 (IVIG…AVTG), 174-194 (ALLL…AYAI), 214-234 (IAFT…AGLM), 241-261 (SGEI…YYAI), and 278-298 (YSLV…YIVL).

This sequence belongs to the UbiA prenyltransferase family. Protoheme IX farnesyltransferase subfamily.

The protein localises to the cell inner membrane. The catalysed reaction is heme b + (2E,6E)-farnesyl diphosphate + H2O = Fe(II)-heme o + diphosphate. The protein operates within porphyrin-containing compound metabolism; heme O biosynthesis; heme O from protoheme: step 1/1. In terms of biological role, converts heme B (protoheme IX) to heme O by substitution of the vinyl group on carbon 2 of heme B porphyrin ring with a hydroxyethyl farnesyl side group. The sequence is that of Protoheme IX farnesyltransferase from Methylococcus capsulatus (strain ATCC 33009 / NCIMB 11132 / Bath).